The sequence spans 316 residues: tRNA dimethylallyltransferase (316 aa).

17-24 (GPTASGKT) contacts ATP. Position 19-24 (19-24 (TASGKT)) interacts with substrate. Interaction with substrate tRNA stretches follow at residues 42–45 (DSAL), 166–170 (QRLSR), and 247–252 (RCVGYR).

It belongs to the IPP transferase family. As to quaternary structure, monomer. The cofactor is Mg(2+).

The enzyme catalyses adenosine(37) in tRNA + dimethylallyl diphosphate = N(6)-dimethylallyladenosine(37) in tRNA + diphosphate. Its function is as follows. Catalyzes the transfer of a dimethylallyl group onto the adenine at position 37 in tRNAs that read codons beginning with uridine, leading to the formation of N6-(dimethylallyl)adenosine (i(6)A). The polypeptide is tRNA dimethylallyltransferase (Salmonella paratyphi C (strain RKS4594)).